The sequence spans 932 residues: Protocadherin gamma-A3 (932 aa).

The first 29 residues, 1–29 (MTNCLSFRNGRGLALLCALLGTLCETGSG), serve as a signal peptide directing secretion. Cadherin domains lie at 30–133 (QIRY…APNF), 134–242 (PTEE…PPMF), 243–347 (TQPE…APEI), 348–452 (TITS…PPTF), 453–562 (PHLS…APEI), and 570–682 (DGST…EPSA). Topologically, residues 30 to 692 (QIRYSVSEEL…KPNDSDLTLY (663 aa)) are extracellular. N265, N419, and N545 each carry an N-linked (GlcNAc...) asparagine glycan. N685 carries an N-linked (GlcNAc...) asparagine glycan. The chain crosses the membrane as a helical span at residues 693-713 (LVVAVAAVSCVFLALVIVLLA). The Cytoplasmic segment spans residues 714-932 (HRLRRWHKSR…KKKSGKKEKK (219 aa)). Disordered regions lie at residues 806-841 (LLQQAPPNTDWRFSQAQRPGTSGSQNGDDTGTWPNN) and 902-932 (ATLTNAAGKRDGKAPAGGNGNKKKSGKKEKK). The segment covering 922-932 (NKKKSGKKEKK) has biased composition (basic residues).

It localises to the cell membrane. In terms of biological role, potential calcium-dependent cell-adhesion protein. May be involved in the establishment and maintenance of specific neuronal connections in the brain. The chain is Protocadherin gamma-A3 (PCDHGA3) from Pan troglodytes (Chimpanzee).